The following is a 543-amino-acid chain: Secreted effector protein SptP (543 aa).

Residues 35-139 are chaperone-binding; that stretch reads TDKAYVAPEK…FINLIKNKDN (105 aa). A Bacterial Rho-GAP domain is found at 162–293; sequence DVGAESKQPL…TAELEKIKAG (132 aa). The Tyrosine-protein phosphatase domain maps to 315–543; the sequence is IPINQQTQVK…QAQLLMTTAS (229 aa). Catalysis depends on Cys481, which acts as the Phosphocysteine intermediate.

As to quaternary structure, forms a complex with SicP.

The protein resides in the secreted. It is found in the host cytoplasm. It carries out the reaction O-phospho-L-tyrosyl-[protein] + H2O = L-tyrosyl-[protein] + phosphate. Effector proteins function to alter host cell physiology and promote bacterial survival in host tissues. This protein includes tyrosine phosphatase and GTPase activating protein (GAP) activities. After bacterial internalization, GAP mediates the reversal of the cytoskeletal changes induced by SopE. This function is independent of its tyrosine phosphatase activity, which remains unclear. The sequence is that of Secreted effector protein SptP (sptP) from Salmonella typhi.